Reading from the N-terminus, the 78-residue chain is Small ribosomal subunit protein bS20 (78 aa).

This sequence belongs to the bacterial ribosomal protein bS20 family.

Binds directly to 16S ribosomal RNA. This is Small ribosomal subunit protein bS20 from Streptococcus sanguinis (strain SK36).